Here is a 61-residue protein sequence, read N- to C-terminus: Venom protein 22.1 (61 aa).

Positions M1 to G18 are cleaved as a signal peptide.

It belongs to the non-disulfide-bridged peptide (NDBP) superfamily. Long chain multifunctional peptide (group 2) family. In terms of tissue distribution, expressed by the venom gland.

It localises to the secreted. The polypeptide is Venom protein 22.1 (Lychas mucronatus (Chinese swimming scorpion)).